The chain runs to 435 residues: Monodehydroascorbate reductase 2 (435 aa).

FAD-binding positions include 14-17 (GGVA), glutamate 41, arginine 48, lysine 53, isoleucine 96, and 147-148 (RE). NAD(+) contacts are provided by residues 172-178 (GGYIGLE), glutamate 196, arginine 202, and glycine 261. NADP(+) is bound at residue 174–178 (YIGLE). 2 residues coordinate NADP(+): arginine 202 and glycine 261. Residue aspartate 298 participates in FAD binding. Residue 314 to 315 (EH) participates in NAD(+) binding. NADP(+) is bound at residue 314 to 315 (EH). Valine 316 contributes to the FAD binding site. Position 320 (arginine 320) interacts with L-ascorbate. Position 349 (tyrosine 349) interacts with FAD. Position 349 (tyrosine 349) interacts with NAD(+). Tyrosine 349 contributes to the NADP(+) binding site. Arginine 351 lines the L-ascorbate pocket. The residue at position 417 (serine 417) is a Phosphoserine.

Belongs to the FAD-dependent oxidoreductase family. Requires FAD as cofactor.

Its subcellular location is the cytoplasm. It carries out the reaction 2 monodehydro-L-ascorbate radical + NADH + H(+) = 2 L-ascorbate + NAD(+). Catalyzes the conversion of monodehydroascorbate to ascorbate, oxidizing NADH in the process. This chain is Monodehydroascorbate reductase 2, found in Arabidopsis thaliana (Mouse-ear cress).